The chain runs to 169 residues: Proepiregulin (169 aa).

Residues 1 to 29 form the signal peptide; the sequence is MTAGRRMEMLCAGRVPALLLCLGFHLLQA. A propeptide spanning residues 30 to 62 is cleaved from the precursor; it reads VLSTTVIPSCIPGESSDNCTALVQTEDNPRVAQ. Residue asparagine 47 is glycosylated (N-linked (GlcNAc...) asparagine). Topologically, residues 60 to 119 are extracellular; that stretch reads VAQVSITKCSSDMNGYCLHGQCIYLVDMSQNYCRCEVGYTGVRCEHFFLTVHQPLSKEYV. Residues 64-104 form the EGF-like domain; sequence SITKCSSDMNGYCLHGQCIYLVDMSQNYCRCEVGYTGVRCE. 3 disulfides stabilise this stretch: cysteine 68–cysteine 81, cysteine 76–cysteine 92, and cysteine 94–cysteine 103. Positions 109–169 are cleaved as a propeptide — removed in mature form; sequence TVHQPLSKEY…TSGDPELPQV (61 aa). The chain crosses the membrane as a helical span at residues 120–140; sequence ALTVILIILFLITVVGSTYYF. The Cytoplasmic portion of the chain corresponds to 141 to 169; sequence CRWYRNRKSKEPKKEYERVTSGDPELPQV.

In terms of assembly, interacts with EGFR and ERBB4. As to expression, in normal adults, expressed predominantly in the placenta and peripheral blood leukocytes. High levels were detected in carcinomas of the bladder, lung, kidney and colon.

The protein resides in the secreted. Its subcellular location is the extracellular space. It is found in the cell membrane. Its function is as follows. Ligand of the EGF receptor/EGFR and ERBB4. Stimulates EGFR and ERBB4 tyrosine phosphorylation. Contributes to inflammation, wound healing, tissue repair, and oocyte maturation by regulating angiogenesis and vascular remodeling and by stimulating cell proliferation. The protein is Proepiregulin (EREG) of Homo sapiens (Human).